The chain runs to 434 residues: UDP-N-acetylmuramoyl-L-alanyl-D-glutamate--2,6-diaminopimelate ligase (434 aa).

Ser-17 contributes to the UDP-N-acetyl-alpha-D-muramoyl-L-alanyl-D-glutamate binding site. 68–74 provides a ligand contact to ATP; that stretch reads GTNGKTT. Residues 111 to 112, Ser-138, Gln-144, and Arg-146 contribute to the UDP-N-acetyl-alpha-D-muramoyl-L-alanyl-D-glutamate site; that span reads TT. Residue Lys-178 is modified to N6-carboxylysine. Meso-2,6-diaminopimelate contacts are provided by residues Arg-326, 350–353, Gly-401, and Glu-405; that span reads DNPR. A Meso-diaminopimelate recognition motif motif is present at residues 350-353; that stretch reads DNPR.

Belongs to the MurCDEF family. MurE subfamily. Requires Mg(2+) as cofactor. In terms of processing, carboxylation is probably crucial for Mg(2+) binding and, consequently, for the gamma-phosphate positioning of ATP.

Its subcellular location is the cytoplasm. The enzyme catalyses UDP-N-acetyl-alpha-D-muramoyl-L-alanyl-D-glutamate + meso-2,6-diaminopimelate + ATP = UDP-N-acetyl-alpha-D-muramoyl-L-alanyl-gamma-D-glutamyl-meso-2,6-diaminopimelate + ADP + phosphate + H(+). It participates in cell wall biogenesis; peptidoglycan biosynthesis. Its function is as follows. Catalyzes the addition of meso-diaminopimelic acid to the nucleotide precursor UDP-N-acetylmuramoyl-L-alanyl-D-glutamate (UMAG) in the biosynthesis of bacterial cell-wall peptidoglycan. The sequence is that of UDP-N-acetylmuramoyl-L-alanyl-D-glutamate--2,6-diaminopimelate ligase from Wolinella succinogenes (strain ATCC 29543 / DSM 1740 / CCUG 13145 / JCM 31913 / LMG 7466 / NCTC 11488 / FDC 602W) (Vibrio succinogenes).